The chain runs to 801 residues: MLVSYKWLKELVDVDVTTAELAEKMSTTGIEVEGVETPAEGLSKLVVGHIVSCEDVPDTYLHLCQVDTGDDELRQVVCGAPNVKTGINVIVAVPGARIADNYKIKKGKIRGMESLGMICSLQELGLSESIIPKEFSDGIQILPEGAIPGDSIFSYLDLDDEIIELSITPNRADALSMRGVAHEVAAIYGKKVHFEEKNLIEEAERAADKISVVIESDKVLSYSARIVKNVTVAPSPQWLQNKLMNAGIRPINNVVDVTNYVLLTYGQPMHAFDFDKFDGTTIVARNAENGEKLITLDGEERDLIADDLVIAVNDQPVALAGVMGGQSTEIGSSSKTVVLEAAVFNGTSIRKTSGRLNLRSESSSRFEKGINYDTVSEAMDFAAAMLQELAGGQVLSGQVTEGVLPTEPVEVSTTLGYVNTRLGTELTYTDIEEVFEKLGFAISGSEVKFTVLVPRRRWDIAIQADLVEEIARIYGYEKLPTTLPEAGATAGELTSMQRLRRRVRTVAEGAGLSEIITYALTTPEKAVQFSTQATNITELMWPMTVDRSALRQNVVSGMLDTIAYNVARKNSNLAVYEIGKVFEQTGNPKEDLPTEVETFTFALTGLVEEKDFQTKAKPVDFFYAKGIVEALFIKLKLDVTFVAQKGLASMHPGRTATILLDGKEIGFVGQVHPQTAKQYDIPETYVAEINLSTIESQMNQALIFEDITKYPSVSRDIALLLAESVSHHDIVSAIETSGVKRLTAIKLFDVYAGNNIAEGYKSMAYSLTFQNPNDNLTDEEVAKYMEKITKSLVEKVNAEIR.

A tRNA-binding domain is found at 39-153; the sequence is AEGLSKLVVG…EGAIPGDSIF (115 aa). Positions 406–481 constitute a B5 domain; sequence TEPVEVSTTL…RIYGYEKLPT (76 aa). The Mg(2+) site is built by aspartate 459, aspartate 465, glutamate 468, and glutamate 469. The FDX-ACB domain occupies 708 to 801; the sequence is TKYPSVSRDI…LVEKVNAEIR (94 aa).

Belongs to the phenylalanyl-tRNA synthetase beta subunit family. Type 1 subfamily. As to quaternary structure, tetramer of two alpha and two beta subunits. Requires Mg(2+) as cofactor.

The protein resides in the cytoplasm. The enzyme catalyses tRNA(Phe) + L-phenylalanine + ATP = L-phenylalanyl-tRNA(Phe) + AMP + diphosphate + H(+). This is Phenylalanine--tRNA ligase beta subunit from Streptococcus agalactiae serotype Ia (strain ATCC 27591 / A909 / CDC SS700).